The chain runs to 352 residues: Alpha-2-HS-glycoprotein (352 aa).

The signal sequence occupies residues 1 to 18; sequence MKSLVLLLCFAQLWSCQS. In terms of domain architecture, Cystatin fetuin-A-type 1 spans 19 to 133; it reads APQGAGLGFR…QFRVLHAQCH (115 aa). 6 cysteine pairs are disulfide-bonded: Cys-32–Cys-343, Cys-89–Cys-100, Cys-114–Cys-132, Cys-146–Cys-149, Cys-208–Cys-219, and Cys-230–Cys-247. N-linked (GlcNAc...) asparagine glycosylation occurs at Asn-99. Ser-134 is subject to Phosphoserine. Position 135 is a phosphothreonine (Thr-135). Residue Ser-138 is modified to Phosphoserine. The region spanning 144-250 is the Cystatin fetuin-A-type 2 domain; the sequence is KFCPRCPILI…EEVSVACKLF (107 aa). Asn-156 and Asn-176 each carry an N-linked (GlcNAc...) asparagine glycan. The span at 256–273 shows a compositional bias: low complexity; it reads PANANPAGPAPTVGQAAP. The interval 256-280 is disordered; sequence PANANPAGPAPTVGQAAPVAPPAGP. A phosphoserine mark is found at Ser-309, Ser-313, Ser-316, and Ser-318. Residues 319-338 form a disordered region; sequence GEVLHSPKVGQPGDAGAAGP. Residues 328–338 show a composition bias toward low complexity; the sequence is GQPGDAGAAGP.

Belongs to the fetuin family. Post-translationally, undergoes complex post-translational modification involving N-glycosylation, and addition of fucose and sialic acid residues. Phosphorylation occurs at a serine residue. In terms of processing, phosphorylated by FAM20C in the extracellular medium. In terms of tissue distribution, synthesized in liver and secreted by the hepatocytes in the blood.

The protein resides in the secreted. Its function is as follows. Could inhibit both insulin-receptor tyrosine kinase activity and insulin-stimulated receptor autophosphorylation and, concomitantly, antagonize the mitogenic effect of the hormone in cultured rat hepatoma cells. The sequence is that of Alpha-2-HS-glycoprotein (Ahsg) from Rattus norvegicus (Rat).